We begin with the raw amino-acid sequence, 1041 residues long: FHIP family protein GF15501 (1041 aa).

2 disordered regions span residues 797-856 and 907-987; these read RKGN…NKRR and SNSS…SEPV. Serine 803 carries the post-translational modification Phosphoserine. Positions 808–824 are enriched in low complexity; it reads NLQQQQALNPAQQQGQQ. Polar residues-rich tracts occupy residues 825–843 and 907–933; these read RSAYATLSAATPVQATPTS and SNSSSESRGFAPGQQSAGTCETSLSTQ. The span at 942 to 973 shows a compositional bias: low complexity; that stretch reads SGSSSNSSMGGSSQTLSAHSNATTTHSSSTLH.

This sequence belongs to the FHIP family.

The polypeptide is FHIP family protein GF15501 (Drosophila ananassae (Fruit fly)).